The chain runs to 117 residues: Inner kinetochore subunit MHF1 (117 aa).

It belongs to the TAF9 family. CENP-S/MHF1 subfamily. As to quaternary structure, the MHF histone-fold complex is a heterotetramer of 2 MHF1-MHF2 heterodimers. Together with MPH1/FANCM, forms the FANCM-MHF complex. Component of the inner kinetochore constitutive centromere-associated network (CCAN).

DsDNA-binding component of a FANCM-MHF complex involved in DNA damage repair and genome maintenance. FANCM-MHF promotes gene conversion at blocked replication forks, probably by reversal of the stalled fork. Component of the kinetochore, a multiprotein complex that assembles on centromeric DNA and attaches chromosomes to spindle microtubules, mediating chromosome segregation and sister chromatid segregation during meiosis and mitosis. Component of the inner kinetochore constitutive centromere-associated network (CCAN), which serves as a structural platform for outer kinetochore assembly. The polypeptide is Inner kinetochore subunit MHF1 (Candida albicans (strain SC5314 / ATCC MYA-2876) (Yeast)).